Here is a 434-residue protein sequence, read N- to C-terminus: Trigger factor (434 aa).

In terms of domain architecture, PPIase FKBP-type spans 163-248; the sequence is GDRVTIDFEG…LTKIEAQHLP (86 aa).

This sequence belongs to the FKBP-type PPIase family. Tig subfamily.

The protein resides in the cytoplasm. The enzyme catalyses [protein]-peptidylproline (omega=180) = [protein]-peptidylproline (omega=0). In terms of biological role, involved in protein export. Acts as a chaperone by maintaining the newly synthesized protein in an open conformation. Functions as a peptidyl-prolyl cis-trans isomerase. This is Trigger factor from Methylibium petroleiphilum (strain ATCC BAA-1232 / LMG 22953 / PM1).